Consider the following 488-residue polypeptide: Multidrug resistance outer membrane protein MdtP (488 aa).

A signal peptide spans 1 to 23 (MINRQLSRLLLCSILGSTTLISG). Residue Cys24 is the site of N-palmitoyl cysteine attachment. Cys24 is lipidated: S-diacylglycerol cysteine.

This sequence belongs to the outer membrane factor (OMF) (TC 1.B.17) family. Could be part of a tripartite efflux system composed of MdtN, MdtO and MdtP.

It localises to the cell outer membrane. Its function is as follows. Could be involved in resistance to puromycin, acriflavine and tetraphenylarsonium chloride. The protein is Multidrug resistance outer membrane protein MdtP (mdtP) of Shigella flexneri.